The chain runs to 123 residues: Small ribosomal subunit protein uS12cz/uS12cy (123 aa).

This sequence belongs to the universal ribosomal protein uS12 family. Part of the 30S ribosomal subunit.

The protein resides in the plastid. Its subcellular location is the chloroplast. Its function is as follows. With S4 and S5 plays an important role in translational accuracy. Located at the interface of the 30S and 50S subunits. This chain is Small ribosomal subunit protein uS12cz/uS12cy (rps12-A), found in Citrus sinensis (Sweet orange).